The chain runs to 334 residues: 4-hydroxyproline 2-epimerase (334 aa).

Residue Cys-90 is the Proton acceptor of the active site. Substrate contacts are provided by residues 91–92 (GH), His-223, and Asp-249. Cys-253 functions as the Proton donor in the catalytic mechanism. Residue 254–255 (GT) participates in substrate binding.

This sequence belongs to the proline racemase family. As to quaternary structure, homodimer.

The enzyme catalyses trans-4-hydroxy-L-proline = cis-4-hydroxy-D-proline. Functionally, catalyzes the epimerization of trans-4-hydroxy-L-proline (t4LHyp) to cis-4-hydroxy-D-proline (c4DHyp). Is likely involved in a degradation pathway that converts t4LHyp to alpha-ketoglutarate, which would allow P.denitrificans to grow on t4LHyp as a sole carbon source. Also seems to be involved in an alternative catabolic pathway that degrades trans-4-hydroxy-L-proline betaine (tHyp-B) to alpha-ketoglutarate; this pathway would permit the utilization of tHyp-B as a sole carbon and nitrogen source. The chain is 4-hydroxyproline 2-epimerase (hypF) from Paracoccus denitrificans (strain Pd 1222).